We begin with the raw amino-acid sequence, 98 residues long: Large ribosomal subunit protein bL28 (98 aa).

In terms of assembly, part of the 50S ribosomal subunit.

The chain is Large ribosomal subunit protein bL28 (rpmB) from Thermus thermophilus (strain ATCC 27634 / DSM 579 / HB8).